The sequence spans 235 residues: Glucosamine-6-phosphate deaminase (235 aa).

Residue D62 is the Proton acceptor; for enolization step of the active site. N128 serves as the catalytic For ring-opening step. Catalysis depends on H130, which acts as the Proton acceptor; for ring-opening step. E135 serves as the catalytic For ring-opening step.

This sequence belongs to the glucosamine/galactosamine-6-phosphate isomerase family. NagB subfamily.

The catalysed reaction is alpha-D-glucosamine 6-phosphate + H2O = beta-D-fructose 6-phosphate + NH4(+). Its pathway is amino-sugar metabolism; N-acetylneuraminate degradation; D-fructose 6-phosphate from N-acetylneuraminate: step 5/5. In terms of biological role, catalyzes the reversible isomerization-deamination of glucosamine 6-phosphate (GlcN6P) to form fructose 6-phosphate (Fru6P) and ammonium ion. The chain is Glucosamine-6-phosphate deaminase from Streptococcus sanguinis (strain SK36).